Here is a 552-residue protein sequence, read N- to C-terminus: ATP synthase subunit alpha (552 aa).

173–180 provides a ligand contact to ATP; that stretch reads GDRQTGKT. The interval 516-552 is disordered; it reads DGKPLVNEPAPSPLDPGLVRQESIPVHRPAARKDDEG.

This sequence belongs to the ATPase alpha/beta chains family. As to quaternary structure, F-type ATPases have 2 components, CF(1) - the catalytic core - and CF(0) - the membrane proton channel. CF(1) has five subunits: alpha(3), beta(3), gamma(1), delta(1), epsilon(1). CF(0) has three main subunits: a(1), b(2) and c(9-12). The alpha and beta chains form an alternating ring which encloses part of the gamma chain. CF(1) is attached to CF(0) by a central stalk formed by the gamma and epsilon chains, while a peripheral stalk is formed by the delta and b chains.

The protein resides in the cell membrane. It carries out the reaction ATP + H2O + 4 H(+)(in) = ADP + phosphate + 5 H(+)(out). In terms of biological role, produces ATP from ADP in the presence of a proton gradient across the membrane. The alpha chain is a regulatory subunit. The polypeptide is ATP synthase subunit alpha (Frankia casuarinae (strain DSM 45818 / CECT 9043 / HFP020203 / CcI3)).